Reading from the N-terminus, the 152-residue chain is Large-conductance mechanosensitive channel (152 aa).

The next 3 membrane-spanning stretches (helical) occupy residues 14–34, 39–59, and 85–105; these read VVDM…VKSL, LMPG…FLVI, and GLFI…FLVI.

Belongs to the MscL family. In terms of assembly, homopentamer.

The protein resides in the cell inner membrane. In terms of biological role, channel that opens in response to stretch forces in the membrane lipid bilayer. May participate in the regulation of osmotic pressure changes within the cell. This Syntrophus aciditrophicus (strain SB) protein is Large-conductance mechanosensitive channel.